Reading from the N-terminus, the 228-residue chain is MNDVKSILVNGLWKNNSALVQLLGMCPLLAVTSTATNALGLGLATTLVLTLTNASISAFRRWMPGEIRIPIYVMIIAAVVSIVQMLINAYAFGLYQSLGIFIPLIVTNCIVVGRAEAFAAKNGPLLSALDGFAIGLGATGAMFVLGSLREILGNGTLFDGADGLLGSWARVLRIEVFHTDTPFLLAMLPPGAFIGLGMMLAVKYLIDERMKRRAAKPVVVEAAAEKAS.

A run of 5 helical transmembrane segments spans residues Ala18 to Ala38, Ile69 to Ala89, Phe92 to Val112, Leu125 to Leu145, and Pro182 to Val202.

Belongs to the NqrDE/RnfAE family. As to quaternary structure, the complex is composed of six subunits: RnfA, RnfB, RnfC, RnfD, RnfE and RnfG.

The protein localises to the cell inner membrane. Its function is as follows. Part of a membrane-bound complex that couples electron transfer with translocation of ions across the membrane. This Cronobacter sakazakii (strain ATCC BAA-894) (Enterobacter sakazakii) protein is Ion-translocating oxidoreductase complex subunit E.